We begin with the raw amino-acid sequence, 140 residues long: Cystatin-C (140 aa).

Positions 1–20 (MASPLRSLLFLLAVLAVAWA) are cleaved as a signal peptide. A Secondary area of contact motif is present at residues 75–79 (QLVAG). 2 disulfides stabilise this stretch: Cys93–Cys103 and Cys117–Cys137.

It belongs to the cystatin family.

It localises to the secreted. Functionally, as an inhibitor of cysteine proteinases, this protein is thought to serve an important physiological role as a local regulator of this enzyme activity. The protein is Cystatin-C (Cst3) of Mus musculus (Mouse).